We begin with the raw amino-acid sequence, 235 residues long: Glycerol-3-phosphate acyltransferase (235 aa).

The next 6 membrane-spanning stretches (helical) occupy residues 4–24 (LLAI…LVAG), 56–76 (VVTL…VAFF), 94–114 (LLAG…GFKG), 122–142 (AGML…IFLL), 152–172 (VASM…KYIF), and 191–211 (FHDS…LAIL).

The protein belongs to the PlsY family. Probably interacts with PlsX.

The protein localises to the cell inner membrane. It carries out the reaction an acyl phosphate + sn-glycerol 3-phosphate = a 1-acyl-sn-glycero-3-phosphate + phosphate. Its pathway is lipid metabolism; phospholipid metabolism. Its function is as follows. Catalyzes the transfer of an acyl group from acyl-phosphate (acyl-PO(4)) to glycerol-3-phosphate (G3P) to form lysophosphatidic acid (LPA). This enzyme utilizes acyl-phosphate as fatty acyl donor, but not acyl-CoA or acyl-ACP. The protein is Glycerol-3-phosphate acyltransferase of Pelodictyon phaeoclathratiforme (strain DSM 5477 / BU-1).